The sequence spans 441 residues: Trigger factor (441 aa).

The region spanning 161-246 (GDMVTVDFQG…VKDVKERILA (86 aa)) is the PPIase FKBP-type domain.

It belongs to the FKBP-type PPIase family. Tig subfamily.

The protein localises to the cytoplasm. It carries out the reaction [protein]-peptidylproline (omega=180) = [protein]-peptidylproline (omega=0). Its function is as follows. Involved in protein export. Acts as a chaperone by maintaining the newly synthesized protein in an open conformation. Functions as a peptidyl-prolyl cis-trans isomerase. This is Trigger factor from Desulfotalea psychrophila (strain LSv54 / DSM 12343).